The sequence spans 329 residues: MLILQKLFDSVKIEIKNSHTIDKLDHIRIKYLGKKGIFSNLIKDLKNFSLEERKKYFIIFNEIKKKTINQINKKKIELNKIILDKQIEKEKIDVSLPGRRIKNGVIHPINHTITYIKNFFSKLGFESISGFEIEDEYHNFDALNIPKDHPARNIHDTFWFDENRLLRTQTSSMQIRIMKKEKPPIRLIFPGKVYRNDYDSTHTPMFHQVEGLIVEKNINFSNLKWIIYNFLRNFFHKDIAIRFRPSYFPFTTPSAEVDVVTNNGKLLEVLGCGMVHPSVLKNVNIDSNFYSACAFGIGIERITMLRYGISDLRSFFENDIRFIKQFKHI.

It belongs to the class-II aminoacyl-tRNA synthetase family. Phe-tRNA synthetase alpha subunit type 1 subfamily. Tetramer of two alpha and two beta subunits. Mg(2+) is required as a cofactor.

The protein localises to the cytoplasm. The catalysed reaction is tRNA(Phe) + L-phenylalanine + ATP = L-phenylalanyl-tRNA(Phe) + AMP + diphosphate + H(+). This is Phenylalanine--tRNA ligase alpha subunit (pheS) from Buchnera aphidicola subsp. Schizaphis graminum (strain Sg).